Reading from the N-terminus, the 132-residue chain is uncharacterized protein (132 aa).

4 helical membrane passes run 15–37, 49–71, 81–103, and 110–129; these read FPEYVAFVVSLSYALNATLLLLY, AFIPVTLSFVAIDFTSIQGLRLF, VILTSLCILEGLALALTSSLALV, and LAATWIAANVASSGLFMAFV.

The protein localises to the cell membrane. This is an uncharacterized protein from Archaeoglobus fulgidus (strain ATCC 49558 / DSM 4304 / JCM 9628 / NBRC 100126 / VC-16).